The following is a 343-amino-acid chain: Dihydroorotase (343 aa).

2 residues coordinate Zn(2+): His14 and His16. Substrate contacts are provided by residues 16–18 (HLR) and Asn42. Residues Lys97, His136, His170, and Asp242 each contribute to the Zn(2+) site. Lys97 is subject to N6-carboxylysine. Residue His136 coordinates substrate. Residue Asp242 is part of the active site. Substrate is bound by residues His246 and Ala258.

This sequence belongs to the metallo-dependent hydrolases superfamily. DHOase family. Class II DHOase subfamily. As to quaternary structure, homodimer. Zn(2+) serves as cofactor.

It carries out the reaction (S)-dihydroorotate + H2O = N-carbamoyl-L-aspartate + H(+). It functions in the pathway pyrimidine metabolism; UMP biosynthesis via de novo pathway; (S)-dihydroorotate from bicarbonate: step 3/3. Its function is as follows. Catalyzes the reversible cyclization of carbamoyl aspartate to dihydroorotate. The protein is Dihydroorotase of Helicobacter hepaticus (strain ATCC 51449 / 3B1).